Consider the following 225-residue polypeptide: Protein YIP4 (225 aa).

Ser-27 and Ser-28 each carry phosphoserine. 5 consecutive transmembrane segments (helical) span residues 91–111, 118–138, 154–176, 180–199, and 205–225; these read WDLWGPLIFSLVIALALALST, SVFTVVVALIWFGEAVCSLNI, LGYSSFPLMIASIVCAFVPLIFI, VIVAMYAWTLFAAMGVLQNS, and KLLAVYPLFLFYFSLAWIIFL.

This sequence belongs to the YIP1 family. In terms of assembly, interacts with the YIP1 family members yip1 and yip5, and with several Rab GTPases.

It is found in the membrane. Functionally, may be involved in proper membrane localization of Rab GTPases. The polypeptide is Protein YIP4 (Schizosaccharomyces pombe (strain 972 / ATCC 24843) (Fission yeast)).